A 638-amino-acid chain; its full sequence is MDLWQLLLTLALAGSSDAFSGSEPTAAILSRASWSLQSVNPGLKTNSSKEPKFTKCRSPERETFSCHWTDAVHHGSKSLGPIQLFYTRRNIQEWTQEWKECPDYVSAGENSCYFNSSFTSVWIPYCIKLTSNGDTVDGKCFSVDEIVQPDPPIALNWTLLNVSLTGIHADIQVRWEAPPNADIQKGWMVLEYELQYKEVNETKWKMMDPILSTSVPVYSLKVDKEYEVRVRSKRRNSGNYGEFSEVLYVTLPQMNQFTCEEDFYFPWLLIIIFGIFGLTVMLFVFLFSKQQRIKMLILPPVPVPKIKGIDPDLLKEGKLEEVNTILAIHDSYKPEFHSDDSWVEFIELDIDEPDEKNEGSDTDRLLSSDHQKSHSNLGVKDGDSGRTSCYEPDILETDFNANNIHEGTSEVAQPQRLKGEADLLCLDQKNQNKSPYHDACPAAQQSSVIQAEKNKPQPLPTDGAESTHQAAHIQLSNPSSLANIDFYAQVSDITPAGSVVLSPGQKNKAGMSQCDMHLEMVSLCQEDFIMDNAYFCEADAKKCIPVAPHIKVESHIEPSFNQEDIYITTESLTTTAGRPGTTEHIPGSEMPVPDYTSIHIVQSPQGLILNATALPLPGKEFLSSCGYVSTDQLNKIMP.

Positions Met-1–Ala-18 are cleaved as a signal peptide. Residues Phe-19–Tyr-264 lie on the Extracellular side of the membrane. N-linked (GlcNAc...) asparagine glycosylation occurs at Asn-46. 2 disulfide bridges follow: Cys-56–Cys-66 and Cys-101–Cys-112. Asn-115 carries an N-linked (GlcNAc...) asparagine glycan. Cys-126 and Cys-140 are disulfide-bonded. In terms of domain architecture, Fibronectin type-III spans Pro-151 to Met-254. Residues Asn-156, Asn-161, and Asn-200 are each glycosylated (N-linked (GlcNAc...) asparagine). The WSXWS motif signature appears at Tyr-240–Ser-244. A helical membrane pass occupies residues Phe-265–Ser-288. Residues Lys-289–Pro-638 lie on the Cytoplasmic side of the membrane. The required for JAK2 binding stretch occupies residues Lys-294 to Val-379. The Box 1 motif signature appears at Ile-297–Lys-305. A UbE motif motif is present at residues Asp-340–Asp-349. Ser-341 bears the Phosphoserine mark. The disordered stretch occupies residues Pro-353–Ser-388. Positions Lys-356–Lys-372 are enriched in basic and acidic residues. 2 positions are modified to phosphotyrosine: Tyr-487 and Tyr-595.

This sequence belongs to the type I cytokine receptor family. Type 1 subfamily. As to quaternary structure, on growth hormone (GH) binding, forms homodimers and binds JAK2 via a box 1-containing domain. In terms of processing, the soluble form (GHBP) is produced by phorbol ester-promoted proteolytic cleavage at the cell surface (shedding) by ADAM17/TACE. Shedding is inhibited by growth hormone (GH) binding to the receptor probably due to a conformational change in GHR rendering the receptor inaccessible to ADAM17. Post-translationally, on GH binding, phosphorylated on tyrosine residues in the cytoplasmic domain by JAK2. Ubiquitinated by the ECS(SOCS2) complex following ligand-binding and phosphorylation by JAK2, leading to its degradation by the proteasome. Regulation by the ECS(SOCS2) complex acts as a negative feedback loop of growth hormone receptor signaling. Ubiquitination is not sufficient for GHR internalization.

It is found in the cell membrane. It localises to the secreted. Its function is as follows. Receptor for pituitary gland growth hormone (GH1) involved in regulating postnatal body growth. On ligand binding, couples to the JAK2/STAT5 pathway. The soluble form (GHBP) acts as a reservoir of growth hormone in plasma and may be a modulator/inhibitor of GH signaling. The protein is Growth hormone receptor (GHR) of Papio anubis (Olive baboon).